The following is a 213-amino-acid chain: CASP-like protein 2A1 (213 aa).

Residues 1–41 (MSKMAEEKAAAVGGLGGAGAADAAQQQQLAAGEAAAARVRP) are Cytoplasmic-facing. A helical transmembrane segment spans residues 42-62 (VETLLRAAPLGLCVAAMTVML). At 63–83 (RNQQSNEYGAVAYSDLGGFKY) the chain is on the extracellular side. The helical transmembrane segment at 84–104 (LVYANGLCAAYSLVSAFYTAV) threads the bilayer. Residues 105–113 (PRPATVSRS) are Cytoplasmic-facing. The chain crosses the membrane as a helical span at residues 114–134 (WLVFLLDQVFTYLILAAGAAA). Over 135–166 (AELLYLAYNGDKEVTWSEACGVFGSFCRQART) the chain is Extracellular. The helical transmembrane segment at 167–187 (SVAITFGTVLCFILLSLISSY) threads the bilayer. Topologically, residues 188-213 (RLFSAYEAPPSSALGSKGVEIAAYPR) are cytoplasmic.

The protein belongs to the Casparian strip membrane proteins (CASP) family. As to quaternary structure, homodimer and heterodimers.

Its subcellular location is the cell membrane. In Zea mays (Maize), this protein is CASP-like protein 2A1.